Consider the following 295-residue polypeptide: Protoheme IX farnesyltransferase (295 aa).

A run of 7 helical transmembrane segments spans residues 43-63 (PIQL…VAAL), 92-112 (SAFV…YALV), 114-134 (PLAA…YTPA), 140-160 (WSTE…WSAG), 166-186 (ALGW…FMAV), 231-251 (LLWG…GLWF), and 272-292 (FFAS…DRLF).

It belongs to the UbiA prenyltransferase family. Protoheme IX farnesyltransferase subfamily.

It is found in the cell inner membrane. The catalysed reaction is heme b + (2E,6E)-farnesyl diphosphate + H2O = Fe(II)-heme o + diphosphate. The protein operates within porphyrin-containing compound metabolism; heme O biosynthesis; heme O from protoheme: step 1/1. In terms of biological role, converts heme B (protoheme IX) to heme O by substitution of the vinyl group on carbon 2 of heme B porphyrin ring with a hydroxyethyl farnesyl side group. The sequence is that of Protoheme IX farnesyltransferase from Opitutus terrae (strain DSM 11246 / JCM 15787 / PB90-1).